The primary structure comprises 365 residues: Protein RecA (365 aa).

73–80 serves as a coordination point for ATP; sequence GPESSGKT.

Belongs to the RecA family.

The protein resides in the cytoplasm. Its function is as follows. Can catalyze the hydrolysis of ATP in the presence of single-stranded DNA, the ATP-dependent uptake of single-stranded DNA by duplex DNA, and the ATP-dependent hybridization of homologous single-stranded DNAs. It interacts with LexA causing its activation and leading to its autocatalytic cleavage. This Prochlorococcus marinus (strain MIT 9215) protein is Protein RecA.